We begin with the raw amino-acid sequence, 809 residues long: Trimethylamine-N-oxide reductase 2 (809 aa).

Residues 1-31 (MTLTRREFIKHSGIAAGALVVTSAAPLPAWA) constitute a signal peptide (tat-type signal). Ser176 contributes to the Mo-bis(molybdopterin guanine dinucleotide) binding site.

The protein belongs to the prokaryotic molybdopterin-containing oxidoreductase family. Requires Mo-bis(molybdopterin guanine dinucleotide) as cofactor. Predicted to be exported by the Tat system. The position of the signal peptide cleavage has not been experimentally proven.

It is found in the periplasm. The catalysed reaction is trimethylamine + 2 Fe(III)-[cytochrome c] + H2O = trimethylamine N-oxide + 2 Fe(II)-[cytochrome c] + 3 H(+). Reduces trimethylamine-N-oxide (TMAO) into trimethylamine; an anaerobic reaction coupled to energy-yielding reactions. Can also reduce other N- and S-oxide compounds such as 4-methylmorpholine-N-oxide and biotin sulfoxide (BSO), but with a lower catalytic efficiency. This chain is Trimethylamine-N-oxide reductase 2 (torZ), found in Escherichia coli O157:H7.